The sequence spans 284 residues: Bifunctional protein FolD (284 aa).

NADP(+)-binding positions include Gly-166–Ser-168, Ser-191, and Ile-232.

Belongs to the tetrahydrofolate dehydrogenase/cyclohydrolase family. In terms of assembly, homodimer.

It catalyses the reaction (6R)-5,10-methylene-5,6,7,8-tetrahydrofolate + NADP(+) = (6R)-5,10-methenyltetrahydrofolate + NADPH. The enzyme catalyses (6R)-5,10-methenyltetrahydrofolate + H2O = (6R)-10-formyltetrahydrofolate + H(+). It functions in the pathway one-carbon metabolism; tetrahydrofolate interconversion. In terms of biological role, catalyzes the oxidation of 5,10-methylenetetrahydrofolate to 5,10-methenyltetrahydrofolate and then the hydrolysis of 5,10-methenyltetrahydrofolate to 10-formyltetrahydrofolate. This chain is Bifunctional protein FolD, found in Neisseria meningitidis serogroup A / serotype 4A (strain DSM 15465 / Z2491).